Reading from the N-terminus, the 220-residue chain is Cysteine-rich venom protein (220 aa).

The SCP domain maps to 20–147 (DLHNSLRRSV…AYKYFYVCQY (128 aa)). Intrachain disulfides connect Cys56-Cys134, Cys73-Cys148, Cys129-Cys145, Cys167-Cys174, Cys170-Cys179, Cys183-Cys215, Cys192-Cys209, and Cys200-Cys213. The ShKT domain occupies 183 to 215 (CTREDEFINCNDLVKQGCQTDYLKSNCAASCFC).

As to expression, expressed by the venom gland.

It localises to the secreted. In terms of biological role, blocks contraction of smooth muscle elicited by high potassium-induced depolarization, but does not block caffeine-stimulated contraction. May target voltage-gated calcium channels in smooth muscle. The polypeptide is Cysteine-rich venom protein (Echis coloratus (Carpet viper)).